Reading from the N-terminus, the 293-residue chain is tRNA pseudouridine synthase B (293 aa).

The Nucleophile role is filled by aspartate 39.

Belongs to the pseudouridine synthase TruB family. Type 1 subfamily.

It carries out the reaction uridine(55) in tRNA = pseudouridine(55) in tRNA. Its function is as follows. Responsible for synthesis of pseudouridine from uracil-55 in the psi GC loop of transfer RNAs. The chain is tRNA pseudouridine synthase B from Streptococcus mutans serotype c (strain ATCC 700610 / UA159).